Consider the following 210-residue polypeptide: Na(+)-translocating NADH-quinone reductase subunit D (210 aa).

5 helical membrane-spanning segments follow: residues 42-62, 72-92, 103-123, 131-151, and 178-198; these read FVMTLAVTAVTAFSNLFISLI, IIAQMAVIASLVIVVDQVLKA, VFVGLIITNCIVMGRAEAYAM, FLDGIGNGLGYGAVLLTVATV, and NGLLLLPPSAFFIIGLIIWGV.

It belongs to the NqrDE/RnfAE family. In terms of assembly, composed of six subunits; NqrA, NqrB, NqrC, NqrD, NqrE and NqrF.

It is found in the cell inner membrane. It catalyses the reaction a ubiquinone + n Na(+)(in) + NADH + H(+) = a ubiquinol + n Na(+)(out) + NAD(+). Its function is as follows. NQR complex catalyzes the reduction of ubiquinone-1 to ubiquinol by two successive reactions, coupled with the transport of Na(+) ions from the cytoplasm to the periplasm. NqrA to NqrE are probably involved in the second step, the conversion of ubisemiquinone to ubiquinol. The chain is Na(+)-translocating NADH-quinone reductase subunit D from Aeromonas salmonicida (strain A449).